The primary structure comprises 100 residues: UPF0045 protein MJ1052 (100 aa).

It belongs to the UPF0045 family.

This is UPF0045 protein MJ1052 from Methanocaldococcus jannaschii (strain ATCC 43067 / DSM 2661 / JAL-1 / JCM 10045 / NBRC 100440) (Methanococcus jannaschii).